Reading from the N-terminus, the 305-residue chain is tRNA pseudouridine synthase B (305 aa).

D39 functions as the Nucleophile in the catalytic mechanism.

The protein belongs to the pseudouridine synthase TruB family. Type 1 subfamily.

The catalysed reaction is uridine(55) in tRNA = pseudouridine(55) in tRNA. Its function is as follows. Responsible for synthesis of pseudouridine from uracil-55 in the psi GC loop of transfer RNAs. This is tRNA pseudouridine synthase B from Staphylococcus aureus (strain MSSA476).